We begin with the raw amino-acid sequence, 432 residues long: Probable M18 family aminopeptidase 2 (432 aa).

The Zn(2+) site is built by histidine 86, histidine 157, and histidine 408.

This sequence belongs to the peptidase M18 family. It depends on Zn(2+) as a cofactor.

This Streptomyces avermitilis (strain ATCC 31267 / DSM 46492 / JCM 5070 / NBRC 14893 / NCIMB 12804 / NRRL 8165 / MA-4680) protein is Probable M18 family aminopeptidase 2.